Consider the following 526-residue polypeptide: Aspartate ammonia-lyase (526 aa).

A disordered region spans residues 1–44; sequence MSKTSNKSSADSKNDAKAEDIVNGENQIATNESQSSDSAAVSER. The span at 10–20 shows a compositional bias: basic and acidic residues; sequence ADSKNDAKAED. A compositionally biased stretch (polar residues) spans 24–39; sequence GENQIATNESQSSDSA. The L-aspartate site is built by Thr-155, Ser-194, Thr-195, Asn-196, and Thr-241. Residues 371–380 form an SS loop region; that stretch reads GSSIMPAKVN. The active-site Proton acceptor is the Ser-372. Ser-373 and Lys-378 together coordinate L-aspartate.

The protein belongs to the class-II fumarase/aspartase family. Aspartase subfamily. In terms of assembly, homotetramer.

The enzyme catalyses L-aspartate = fumarate + NH4(+). In terms of biological role, catalyzes the reversible conversion of L-aspartate to fumarate and ammonia. This chain is Aspartate ammonia-lyase, found in Corynebacterium glutamicum (strain ATCC 13032 / DSM 20300 / JCM 1318 / BCRC 11384 / CCUG 27702 / LMG 3730 / NBRC 12168 / NCIMB 10025 / NRRL B-2784 / 534).